The following is a 328-amino-acid chain: Malate dehydrogenase (328 aa).

Residue 12-18 coordinates NAD(+); the sequence is GAAGQIA. Residues Arg-93 and Arg-99 each coordinate substrate. NAD(+) contacts are provided by residues Asn-106, Gln-113, and 130-132; that span reads VGN. Substrate contacts are provided by Asn-132 and Arg-163. The Proton acceptor role is filled by His-188.

The protein belongs to the LDH/MDH superfamily. MDH type 2 family.

It catalyses the reaction (S)-malate + NAD(+) = oxaloacetate + NADH + H(+). Its function is as follows. Catalyzes the reversible oxidation of malate to oxaloacetate. In Burkholderia lata (strain ATCC 17760 / DSM 23089 / LMG 22485 / NCIMB 9086 / R18194 / 383), this protein is Malate dehydrogenase.